Reading from the N-terminus, the 206-residue chain is N-(5'-phosphoribosyl)anthranilate isomerase (206 aa).

It belongs to the TrpF family.

It carries out the reaction N-(5-phospho-beta-D-ribosyl)anthranilate = 1-(2-carboxyphenylamino)-1-deoxy-D-ribulose 5-phosphate. The protein operates within amino-acid biosynthesis; L-tryptophan biosynthesis; L-tryptophan from chorismate: step 3/5. This Citrifermentans bemidjiense (strain ATCC BAA-1014 / DSM 16622 / JCM 12645 / Bem) (Geobacter bemidjiensis) protein is N-(5'-phosphoribosyl)anthranilate isomerase.